Here is a 613-residue protein sequence, read N- to C-terminus: Portal protein (613 aa).

The interval 577–613 (ATGGDHGIRQAPSARGDTEPDHAKSKPARDPPPGAGS) is disordered. The segment covering 592 to 605 (GDTEPDHAKSKPAR) has biased composition (basic and acidic residues).

Belongs to the herpesviridae portal protein family. As to quaternary structure, homododecamerizes. Interacts with terminase subunits TRM1 and TRM3.

It localises to the virion. It is found in the host nucleus. The protein localises to the host cytoplasm. Functionally, forms a portal in the viral capsid through which viral DNA is translocated during DNA packaging. Assembles as a dodecamer at a single fivefold axe of the T=16 icosahedric capsid. Binds to the molecular motor that translocates the viral DNA, termed terminase. This chain is Portal protein, found in Epstein-Barr virus (strain B95-8) (HHV-4).